We begin with the raw amino-acid sequence, 532 residues long: Probable inorganic phosphate transporter 1-9 (532 aa).

The Cytoplasmic portion of the chain corresponds to Met1 to Ala22. Residues Ile23 to Ile43 form a helical membrane-spanning segment. Residues Met44–Leu62 lie on the Extracellular side of the membrane. A helical transmembrane segment spans residues Ser63–Leu83. Over Gly84–Lys91 the chain is Cytoplasmic. A helical membrane pass occupies residues Val92–Cys112. The Extracellular portion of the chain corresponds to Thr113–Gly124. Residues Phe125–Met145 traverse the membrane as a helical segment. Residues Ser146–Arg154 are Cytoplasmic-facing. The chain crosses the membrane as a helical span at residues Gly155–Val175. Residues Thr176 to Ser207 are Extracellular-facing. Residues Asp208–Trp228 form a helical membrane-spanning segment. Topologically, residues Arg229–Leu292 are cytoplasmic. A helical transmembrane segment spans residues His293–Thr313. Residues Ser314–Lys343 lie on the Extracellular side of the membrane. Residues Leu344–Ile364 form a helical membrane-spanning segment. Residues Asp365 to Lys371 are Cytoplasmic-facing. The chain crosses the membrane as a helical span at residues Ile372 to Ser392. At Trp393 to Met406 the chain is on the extracellular side. A helical membrane pass occupies residues Val407–Ile427. The Cytoplasmic portion of the chain corresponds to Pro428–His441. The helical transmembrane segment at Gly442–Ala462 threads the bilayer. Residues Thr463–Arg478 lie on the Extracellular side of the membrane. The chain crosses the membrane as a helical span at residues Ile479–Thr499. Residues Arg500–Tyr532 lie on the Cytoplasmic side of the membrane. Residues Glu509–Tyr532 form a disordered region. A compositionally biased stretch (polar residues) spans Val515–Ala524.

This sequence belongs to the major facilitator superfamily. Phosphate:H(+) symporter (TC 2.A.1.9) family.

The protein localises to the membrane. Functionally, high-affinity transporter for external inorganic phosphate. The polypeptide is Probable inorganic phosphate transporter 1-9 (PHT1-9) (Arabidopsis thaliana (Mouse-ear cress)).